Reading from the N-terminus, the 359-residue chain is MITVNVDLGERAYPIHIGAGLIGRTELFAPHITGSSVTIVTNTTVDPLYGDALRAALAPLGKRVSTVVLPDGEAYKNWETLNLIFDGLLTERADRKTTLVALGGGVIGDMTGFAAACYMRGVPFIQVPTTLLSQVDSSVGGKTGINHPLGKNMIGAFYQPQAVIADIGALTTLPDRELAAGVAEVIKTGAIADAEFFDWIEANVDALNRREPAALAHAVKRSCEIKASVVAADEREGGLRAILNFGHTFGHAIEAGLGYGEWLHGEAVGCGMVMAADLSVRLGLLDEASRQRLDAVIAAAHLPVRGPALGDARYMELMRVDKKAEAGAIKFILLKRFGDTLITQAPDEAVFATLAQTTR.

Residues 71 to 76 (DGEAYK), 105 to 109 (GVIGD), 129 to 130 (TT), Lys142, and Lys151 contribute to the NAD(+) site. 3 residues coordinate Zn(2+): Glu184, His247, and His264.

Belongs to the sugar phosphate cyclases superfamily. Dehydroquinate synthase family. Co(2+) is required as a cofactor. Requires Zn(2+) as cofactor. NAD(+) serves as cofactor.

The protein resides in the cytoplasm. It carries out the reaction 7-phospho-2-dehydro-3-deoxy-D-arabino-heptonate = 3-dehydroquinate + phosphate. It participates in metabolic intermediate biosynthesis; chorismate biosynthesis; chorismate from D-erythrose 4-phosphate and phosphoenolpyruvate: step 2/7. Functionally, catalyzes the conversion of 3-deoxy-D-arabino-heptulosonate 7-phosphate (DAHP) to dehydroquinate (DHQ). The polypeptide is 3-dehydroquinate synthase (Burkholderia ambifaria (strain MC40-6)).